A 427-amino-acid chain; its full sequence is Putative F-box/FBD/LRR-repeat protein At4g13965 (427 aa).

Positions Ala-13–Leu-61 constitute an F-box domain. LRR repeat units lie at residues Phe-67–Val-93, Cys-98–Val-122, Thr-141–Tyr-168, Val-169–Arg-194, Leu-213–Gly-241, and Ser-258–Phe-284. One can recognise an FBD domain in the interval Lys-346–Phe-396.

The protein is Putative F-box/FBD/LRR-repeat protein At4g13965 of Arabidopsis thaliana (Mouse-ear cress).